The chain runs to 74 residues: DNA-directed RNA polymerase subunit omega (74 aa).

This sequence belongs to the RNA polymerase subunit omega family. The RNAP catalytic core consists of 2 alpha, 1 beta, 1 beta' and 1 omega subunit. When a sigma factor is associated with the core the holoenzyme is formed, which can initiate transcription.

It catalyses the reaction RNA(n) + a ribonucleoside 5'-triphosphate = RNA(n+1) + diphosphate. Functionally, promotes RNA polymerase assembly. Latches the N- and C-terminal regions of the beta' subunit thereby facilitating its interaction with the beta and alpha subunits. This chain is DNA-directed RNA polymerase subunit omega, found in Helicobacter pylori (strain Shi470).